Reading from the N-terminus, the 455-residue chain is Deoxyribodipyrimidine photo-lyase (455 aa).

Residues 2–131 enclose the Photolyase/cryptochrome alpha/beta domain; it reads SVAVVLFTSD…ELHVHDAVVT (130 aa). FAD contacts are provided by residues Y219 and 231–235; that span reads TSRLS. Interaction with DNA stretches follow at residues 266 to 273 and 330 to 331; these read QLAWRDFH and NR. 361 to 363 provides a ligand contact to FAD; that stretch reads DGD. DNA is bound at residue Q392.

Belongs to the DNA photolyase class-1 family. As to quaternary structure, monomer. FAD serves as cofactor. The cofactor is coenzyme F420-(gamma-Glu)n.

It catalyses the reaction cyclobutadipyrimidine (in DNA) = 2 pyrimidine residues (in DNA).. Functionally, involved in repair of UV radiation-induced DNA damage. Catalyzes the light-dependent monomerization (300-600 nm) of cyclobutyl pyrimidine dimers (in cis-syn configuration), which are formed between adjacent bases on the same DNA strand upon exposure to ultraviolet radiation. The sequence is that of Deoxyribodipyrimidine photo-lyase (phr) from Streptomyces griseus.